Consider the following 389-residue polypeptide: 26S proteasome non-ATPase regulatory subunit 6 (389 aa).

In terms of domain architecture, PCI spans 193–361 (DFKQAAELFL…EVVETNRPDS (169 aa)).

This sequence belongs to the proteasome subunit S10 family. As to quaternary structure, component of the 19S proteasome regulatory particle complex. The 26S proteasome consists of a 20S core particle (CP) and two 19S regulatory subunits (RP). The regulatory particle is made of a lid composed of 9 subunits including PSMD6, a base containing 6 ATPases and few additional components.

In terms of biological role, component of the 26S proteasome, a multiprotein complex involved in the ATP-dependent degradation of ubiquitinated proteins. This complex plays a key role in the maintenance of protein homeostasis by removing misfolded or damaged proteins, which could impair cellular functions, and by removing proteins whose functions are no longer required. Therefore, the proteasome participates in numerous cellular processes, including cell cycle progression, apoptosis, or DNA damage repair. The protein is 26S proteasome non-ATPase regulatory subunit 6 (PSMD6) of Bos taurus (Bovine).